The following is a 117-amino-acid chain: Small ribosomal subunit protein uS8c (117 aa).

The protein belongs to the universal ribosomal protein uS8 family. As to quaternary structure, part of the 30S ribosomal subunit.

It localises to the plastid. Its subcellular location is the chloroplast. One of the primary rRNA binding proteins, it binds directly to 16S rRNA central domain where it helps coordinate assembly of the platform of the 30S subunit. The sequence is that of Small ribosomal subunit protein uS8c (rps8) from Cyanidioschyzon merolae (strain NIES-3377 / 10D) (Unicellular red alga).